The primary structure comprises 589 residues: Isocitrate dehydrogenase kinase/phosphatase (589 aa).

ATP contacts are provided by residues 322–328 and lysine 343; that span reads APGIRGL. The active site involves aspartate 378.

The protein belongs to the AceK family.

It is found in the cytoplasm. The catalysed reaction is L-seryl-[isocitrate dehydrogenase] + ATP = O-phospho-L-seryl-[isocitrate dehydrogenase] + ADP + H(+). Functionally, bifunctional enzyme which can phosphorylate or dephosphorylate isocitrate dehydrogenase (IDH) on a specific serine residue. This is a regulatory mechanism which enables bacteria to bypass the Krebs cycle via the glyoxylate shunt in response to the source of carbon. When bacteria are grown on glucose, IDH is fully active and unphosphorylated, but when grown on acetate or ethanol, the activity of IDH declines drastically concomitant with its phosphorylation. The polypeptide is Isocitrate dehydrogenase kinase/phosphatase (Azoarcus sp. (strain BH72)).